We begin with the raw amino-acid sequence, 316 residues long: Probable porphobilinogen deaminase (316 aa).

Cysteine 234 is subject to S-(dipyrrolylmethanemethyl)cysteine.

It belongs to the HMBS family. Dipyrromethane is required as a cofactor.

It carries out the reaction 4 porphobilinogen + H2O = hydroxymethylbilane + 4 NH4(+). It functions in the pathway porphyrin-containing compound metabolism; protoporphyrin-IX biosynthesis; coproporphyrinogen-III from 5-aminolevulinate: step 2/4. In terms of biological role, tetrapolymerization of the monopyrrole PBG into the hydroxymethylbilane pre-uroporphyrinogen in several discrete steps. The polypeptide is Probable porphobilinogen deaminase (Methanosarcina mazei (strain ATCC BAA-159 / DSM 3647 / Goe1 / Go1 / JCM 11833 / OCM 88) (Methanosarcina frisia)).